The primary structure comprises 385 residues: Multidrug resistance protein MdtE (385 aa).

An N-terminal signal peptide occupies residues 1 to 20; sequence MNRRRKLLIPLLFCGAMLTA. Residue cysteine 21 is the site of N-palmitoyl cysteine attachment. Residue cysteine 21 is the site of S-diacylglycerol cysteine attachment.

This sequence belongs to the membrane fusion protein (MFP) (TC 8.A.1) family. Homotrimer. Part of the tripartite efflux system MdtEF-TolC, which is composed of an inner membrane transporter, MdtF, a membrane fusion protein, MdtE, and an outer membrane component, TolC. The complex forms a large protein conduit and can translocate molecules across both the inner and outer membranes.

Its subcellular location is the cell inner membrane. In terms of biological role, part of the tripartite efflux system MdtEF-TolC, which confers resistance to compounds such as rhodamine 6G, erythromycin, doxorubicin, ethidium bromide, TPP, SDS, deoxycholate, crystal violet and benzalkonium. The polypeptide is Multidrug resistance protein MdtE (mdtE) (Escherichia coli (strain K12)).